Here is a 292-residue protein sequence, read N- to C-terminus: Probable endonuclease 4 (292 aa).

The Zn(2+) site is built by histidine 71, histidine 111, glutamate 148, aspartate 182, histidine 185, histidine 217, aspartate 230, histidine 232, and glutamate 262.

Belongs to the AP endonuclease 2 family. The cofactor is Zn(2+).

It catalyses the reaction Endonucleolytic cleavage to 5'-phosphooligonucleotide end-products.. Functionally, endonuclease IV plays a role in DNA repair. It cleaves phosphodiester bonds at apurinic or apyrimidinic (AP) sites, generating a 3'-hydroxyl group and a 5'-terminal sugar phosphate. The sequence is that of Probable endonuclease 4 from Aster yellows witches'-broom phytoplasma (strain AYWB).